The sequence spans 87 residues: Large ribosomal subunit protein eL31 (87 aa).

This sequence belongs to the eukaryotic ribosomal protein eL31 family.

The chain is Large ribosomal subunit protein eL31 (rpl31e) from Methanocaldococcus jannaschii (strain ATCC 43067 / DSM 2661 / JAL-1 / JCM 10045 / NBRC 100440) (Methanococcus jannaschii).